Reading from the N-terminus, the 280-residue chain is Diaminopimelate epimerase (280 aa).

Residues Asn15 and Asn66 each coordinate substrate. The Proton donor role is filled by Cys75. Substrate contacts are provided by residues 76 to 77 (GN), Asn163, Asn196, and 214 to 215 (ER). The Proton acceptor role is filled by Cys223. Position 224 to 225 (224 to 225 (GT)) interacts with substrate.

This sequence belongs to the diaminopimelate epimerase family. As to quaternary structure, homodimer.

The protein resides in the cytoplasm. It catalyses the reaction (2S,6S)-2,6-diaminopimelate = meso-2,6-diaminopimelate. It functions in the pathway amino-acid biosynthesis; L-lysine biosynthesis via DAP pathway; DL-2,6-diaminopimelate from LL-2,6-diaminopimelate: step 1/1. Catalyzes the stereoinversion of LL-2,6-diaminopimelate (L,L-DAP) to meso-diaminopimelate (meso-DAP), a precursor of L-lysine and an essential component of the bacterial peptidoglycan. This is Diaminopimelate epimerase from Phocaeicola vulgatus (strain ATCC 8482 / DSM 1447 / JCM 5826 / CCUG 4940 / NBRC 14291 / NCTC 11154) (Bacteroides vulgatus).